A 420-amino-acid polypeptide reads, in one-letter code: Glutamyl-tRNA reductase (420 aa).

Substrate is bound by residues 49–52, Ser107, 112–114, and Gln118; these read TCNR and EPQ. Cys50 functions as the Nucleophile in the catalytic mechanism. Residue 187 to 192 coordinates NADP(+); that stretch reads GAGETI.

The protein belongs to the glutamyl-tRNA reductase family. As to quaternary structure, homodimer.

The catalysed reaction is (S)-4-amino-5-oxopentanoate + tRNA(Glu) + NADP(+) = L-glutamyl-tRNA(Glu) + NADPH + H(+). Its pathway is porphyrin-containing compound metabolism; protoporphyrin-IX biosynthesis; 5-aminolevulinate from L-glutamyl-tRNA(Glu): step 1/2. In terms of biological role, catalyzes the NADPH-dependent reduction of glutamyl-tRNA(Glu) to glutamate 1-semialdehyde (GSA). This chain is Glutamyl-tRNA reductase, found in Methylococcus capsulatus (strain ATCC 33009 / NCIMB 11132 / Bath).